Here is a 377-residue protein sequence, read N- to C-terminus: Guanine nucleotide-binding protein subunit beta (377 aa).

WD repeat units follow at residues Gly63–Asn93, Leu105–Ser135, Gly154–Asp185, Gly202–Asp233, Gly246–Asp276, Gly292–Asp323, and Ser339–Ala369. 2 consecutive short sequence motifs (DWD box) follow at residues Phe220–Arg235 and Phe263–Arg278.

This sequence belongs to the WD repeat G protein beta family. In terms of assembly, g proteins are composed of 3 units, alpha, beta and gamma. Interacts with the gamma subunits GG1 and GG2. The dimers GB1-GG1 and GB1-GG2 interact with NDL1, NDL2 and NDL3. Interacts with WNK8. Interacts with XLG2. Interacts with RACK1A, RACK1B and RACK1C. Interacts with ZAR1 (via GBeta-binding domain). In terms of tissue distribution, expressed in seedlings (especially at the hypocotyl/root junction), roots, leaves (restricted to veins and guard cells), and flowers. Also present in hydathods. Expressed in guard cells, mesophyll tissue of cotyledons, trichomes and whole siliques, but not in seeds.

It localises to the cell membrane. It is found in the cytoplasm. Its subcellular location is the nucleus. In terms of biological role, guanine nucleotide-binding proteins (G proteins) are involved as a modulator or transducer in various transmembrane signaling systems. The beta and gamma chains are required for the GTPase activity, for replacement of GDP by GTP, and for G protein-effector interaction. The heterotrimeric G-protein controls defense responses to necrotrophic and vascular fungi probably by modulating cell wall-related genes expression (e.g. lower xylose content in cell walls); involved in resistance to fungal pathogens such as Alternaria brassicicola and Fusarium oxysporum. Modulates root architecture (e.g. lateral root formation). Acts with XGL3 in the positive regulation of root waving and root skewing. Involved in the asymmetric division of zygote and specification of apical and basal cell lineages. The sequence is that of Guanine nucleotide-binding protein subunit beta (GB1) from Arabidopsis thaliana (Mouse-ear cress).